A 276-amino-acid polypeptide reads, in one-letter code: Secreted RxLR effector protein 120 (276 aa).

An N-terminal signal peptide occupies residues 1–21 (MRGAYYVITALLVVASSQTSA). A RxLR-dEER motif is present at residues 48-65 (QSLRGSRDVPDDLAHEER). The segment at 97 to 130 (GKRPRVAEKDALEKASGADEASKKPRNTATDDAF) is disordered. The span at 101 to 119 (RVAEKDALEKASGADEASK) shows a compositional bias: basic and acidic residues.

It belongs to the RxLR effector family.

The protein resides in the secreted. The protein localises to the host nucleus. In terms of biological role, secreted effector that completely suppresses the host cell death induced by cell death-inducing proteins. The protein is Secreted RxLR effector protein 120 of Plasmopara viticola (Downy mildew of grapevine).